The following is a 508-amino-acid chain: O-acetyltransferase pigM (508 aa).

The disordered stretch occupies residues 166 to 188 (TPAPDERGKISPSLEDAAGSPRT).

Its pathway is secondary metabolite biosynthesis. Functionally, O-acetyltransferase; part of the gene cluster that mediates the biosynthesis of azaphilone pigments (MonAzPs), a complex mixture of compounds with a common azaphilone skeleton very widely used as food colorants. PigM and pigO are involved in the elimination of the omega-1 alcohol with pigM acting as an O-acetyltransferase that synthesizes the O-11 acetyl intermediate whereas pigO eliminates acetic acid to yield an intermediate with a C10(11) double bond. The first step of the pathway is performed by the nrPKS pigA that forms the hexaketide precursor from successive condensations of five malonyl-CoA units, with a simple acetyl-CoA starter unit. The role of esterase pigG is not clear, but it may play at most a supplementary role in the formation of the benzaldehyde produced by the pigA nrPKS. This very reactive benzaldehyde is intercepted by the pigC ketoreductase that to provide the first stable enzyme-free MonAzPs intermediate, 6-(4-hydroxy-2-oxopentyl)-3-methyl-2,4-dioxocyclohexane carbaldehyde, also known as M7PKS-1. The FAD-dependent monooxygenase pigN hydroxylates M7PKS-1 at C-4, which triggers the formation of the pyran ring. PigJ, pigK and pigD are involved in the acetylation of the pyran ring. PigJ and pigK form the two subunits of a dedicated fungal FAS that produces the side chain fatty acyl moiety of MonAzPs and pigD transfers the fatty acyl chain to the C-4 alcohol. PigM and pigO are involved in the elimination of the omega-1 alcohol. PigM acts as an O-acetyltransferase that synthesizes the putative O-11 acetyl intermediate whereas pigO eliminates acetic acid to yield an intermediate with a C10(11) double bond. The dehydration of the C-11 alcohol followed by the reduction of the C6(7) double bond by the NAD(P)H-dependent oxidoreductase pigE increases the electrophilicity of the C-5 ketone of the resulting acyl benzopyran. This in turn sets up the C-5 ketone for an intramolecular Knoevenagel aldol condensation with the C-20 enol of the side chain. This condensation affords the characteristic linear tricyclic carbon skeletons of the yellow pigments that serve as the common precursors for the classical yellow pigments monascin and ankaflavin, orange pigments rubopunctatin and monascorubrin, and red pigments ribropunctamine and monascorubramine. The FAD-dependent oxidoreductase pigF is especially invoved in the biosynthesis of orange and red pigments via desaturation of C6(7). The sequence is that of O-acetyltransferase pigM from Monascus ruber (Mold).